A 1659-amino-acid polypeptide reads, in one-letter code: Fatty acid synthase subunit alpha (1659 aa).

Residues 114–139 (TQAQASGGAGTIAGAGSSTAPVTAPP) are disordered. The 76-residue stretch at 160–235 (AQAFEIVRTL…AALQKTFTGQ (76 aa)) folds into the Carrier domain. An O-(pantetheine 4'-phosphoryl)serine modification is found at Ser-195. Positions 588–826 (GRSVLITGAG…LCLMFNTMCS (239 aa)) are ketoreductase (KR) domain. Positions 1030–1575 (KQLLHEVLIQ…QKGAQTIVVH (546 aa)) constitute a Ketosynthase family 3 (KS3) domain. Active-site for beta-ketoacyl synthase activity residues include Cys-1217, His-1458, and His-1499. The interval 1631 to 1659 (ETLLDPTPPQTNVDDRVARSIVQQESAEP) is disordered.

This sequence belongs to the thiolase-like superfamily. Fungal fatty acid synthetase subunit alpha family. As to quaternary structure, [Alpha(6)beta(6)] hexamers of two multifunctional subunits (alpha and beta). 4'-phosphopantetheine is transferred from CoA to a specific serine of the acyl carrier domain by the C-terminal PPT domain. This modification is essential for activity because fatty acids are bound in thioester linkage to the sulfhydryl of the prosthetic group.

The catalysed reaction is acetyl-CoA + n malonyl-CoA + 2n NADPH + 4n H(+) = a long-chain-acyl-CoA + n CoA + n CO2 + 2n NADP(+).. It carries out the reaction a fatty acyl-[ACP] + malonyl-[ACP] + H(+) = a 3-oxoacyl-[ACP] + holo-[ACP] + CO2. The enzyme catalyses a (3R)-hydroxyacyl-[ACP] + NADP(+) = a 3-oxoacyl-[ACP] + NADPH + H(+). Its pathway is secondary metabolite biosynthesis. Its function is as follows. Fatty acid synthase subunit alpha; part of the gene cluster that mediates the biosynthesis of aspercryptins, linear lipopeptides built from six amino acids including 2 highly unusual and nonproteogenic amino acids, 2-amino-octanoic acid (2aoa) and 2-amino-dodecanol (2adol). The core structure of aspercryptins is as follows: Ser/Ala-Thr-Ile/Val-2aoa-Asn-2adol. The first step of aspercryptin biosynthesis is the generation of the fatty acid precursors, octanoic and dodecanoic acids, by the FAS subunits atnF and atnM. The fatty acid precursors are likely transformed into the corresponding alpha-amino fatty acids in three steps. First, they are hydroxylated by the cytochrome P450 monooxygenase atnE, then oxidized to the corresponding alpha-keto acids by the NAD(P)-dependent oxidoreductase atnD, and finally converted to the alpha-amino fatty acids by the PLP-dependent aminotransferases atnH or atnJ. the alpha-amino fatty acids, 2-amino-octanoic and 2-amino-dodecanoic acids, are recognized, activated, and covalently tethered to the NRPS atnA by its fourth and sixth adenylation domains. The second module of atnA is the Thr module and contains an epimerase (E) domain responsible for the epimerization of Thr to D-allo-Thr. Additionally, despite atnA having only one epimerase domain, the first amino acid of aspercryptin A1 is D-Ser, suggesting that serine is either loaded directly as D-Ser on the first module or that the epimerase domain in the threonine module epimerizes both L-Ser and L-Thr. After condensation of the hexapeptide of aspercryptin, the C-terminal reductase (TE) domain might be involved in the reductive release and production of the aldehyde hexapeptide. Further reduction would generate aspercryptins. The variety of aspercryptins produced reflects the flexibility of the atnA NRPS, allowing incorporation of alanine instead of serine, valine for isoleucine, and a C10 fatty amino alcohol instead of the C12 version. AtnB seems to be involved in the selectivity for Ile versus Val by the third module. Moreover, type B, C and D aspercryptins have an additional N-terminal cichorine, acetyl and propionyl group respectively. In Emericella nidulans (strain FGSC A4 / ATCC 38163 / CBS 112.46 / NRRL 194 / M139) (Aspergillus nidulans), this protein is Fatty acid synthase subunit alpha.